We begin with the raw amino-acid sequence, 244 residues long: Protein crossbronx (244 aa).

The UBC core domain occupies 20-176; sequence QQEYKILAEY…VQKNIKESKE (157 aa). Positions 209-244 are disordered; that stretch reads AGRSKQTEPSAQQANGGHATGLSWVKEGEFKPLSIE.

Belongs to the ubiquitin-conjugating enzyme family. FTS subfamily.

This is Protein crossbronx (cbx) from Drosophila erecta (Fruit fly).